We begin with the raw amino-acid sequence, 259 residues long: DNA repair protein RecO (259 aa).

Belongs to the RecO family.

In terms of biological role, involved in DNA repair and RecF pathway recombination. This is DNA repair protein RecO from Chloroherpeton thalassium (strain ATCC 35110 / GB-78).